We begin with the raw amino-acid sequence, 70 residues long: Putative membrane protein insertion efficiency factor (70 aa).

Belongs to the UPF0161 family.

Its subcellular location is the cell membrane. Its function is as follows. Could be involved in insertion of integral membrane proteins into the membrane. The sequence is that of Putative membrane protein insertion efficiency factor from Lachnoclostridium phytofermentans (strain ATCC 700394 / DSM 18823 / ISDg) (Clostridium phytofermentans).